A 97-amino-acid polypeptide reads, in one-letter code: Exodeoxyribonuclease 7 small subunit (97 aa).

Residues 1–22 are disordered; that stretch reads MAKTASPGATPPDNGTEPLPDN.

Belongs to the XseB family. In terms of assembly, heterooligomer composed of large and small subunits.

The protein resides in the cytoplasm. The catalysed reaction is Exonucleolytic cleavage in either 5'- to 3'- or 3'- to 5'-direction to yield nucleoside 5'-phosphates.. Bidirectionally degrades single-stranded DNA into large acid-insoluble oligonucleotides, which are then degraded further into small acid-soluble oligonucleotides. This is Exodeoxyribonuclease 7 small subunit from Burkholderia ambifaria (strain MC40-6).